The primary structure comprises 602 residues: Myotubularin (602 aa).

The disordered stretch occupies residues 1–40 (MASSSASDCDAHPVERESMRKVSQDGVRQDMSKSGPRLPG). Positions 9 to 31 (CDAHPVERESMRKVSQDGVRQDM) are enriched in basic and acidic residues. Ser-18 is subject to Phosphoserine. The GRAM domain occupies 28–97 (RQDMSKSGPR…GVISRIEKMG (70 aa)). The region spanning 163 to 538 (GWAIYNPVEE…RHLELWVNYY (376 aa)) is the Myotubularin phosphatase domain. Residues Asn-288, Asn-313, and Ile-314 each coordinate a 1,2-diacyl-sn-glycero-3-phospho-(1D-myo-inositol-3,5-bisphosphate). Asn-288, Asn-313, and Ile-314 together coordinate a 1,2-diacyl-sn-glycero-3-phospho-(1D-myo-inositol-3-phosphate). The Phosphocysteine intermediate role is filled by Cys-375. Positions 376, 377, 378, 379, 380, 381, 417, and 421 each coordinate a 1,2-diacyl-sn-glycero-3-phospho-(1D-myo-inositol-3,5-bisphosphate). Residues Ser-376, Asp-377, Gly-378, Trp-379, Asp-380, and Arg-381 each contribute to the a 1,2-diacyl-sn-glycero-3-phospho-(1D-myo-inositol-3-phosphate) site. Arg-421 is a binding site for a 1,2-diacyl-sn-glycero-3-phospho-(1D-myo-inositol-3-phosphate). Position 495 is a phosphothreonine (Thr-495). Residues 578–592 (PTKLTDSSTPPSGSA) show a composition bias toward polar residues. Residues 578–602 (PTKLTDSSTPPSGSAQIAPRMQTHF) form a disordered region.

It belongs to the protein-tyrosine phosphatase family. Non-receptor class myotubularin subfamily. As to quaternary structure, heterodimer with MTMR12. Interacts with KMT2A/MLL1 (via SET domain). Interacts with DES in skeletal muscle but not in cardiac muscle. Interacts with SPEG.

It localises to the cytoplasm. It is found in the cell membrane. Its subcellular location is the cell projection. The protein resides in the filopodium. The protein localises to the ruffle. It localises to the late endosome. It is found in the myofibril. Its subcellular location is the sarcomere. It catalyses the reaction a 1,2-diacyl-sn-glycero-3-phospho-(1D-myo-inositol-3-phosphate) + H2O = a 1,2-diacyl-sn-glycero-3-phospho-(1D-myo-inositol) + phosphate. The enzyme catalyses a 1,2-diacyl-sn-glycero-3-phospho-(1D-myo-inositol-3,5-bisphosphate) + H2O = a 1,2-diacyl-sn-glycero-3-phospho-(1D-myo-inositol-5-phosphate) + phosphate. The catalysed reaction is 1,2-dioctanoyl-sn-glycero-3-phospho-(1-D-myo-inositol-3-phosphate) + H2O = 1,2-dioctanoyl-sn-glycero-3-phospho-(1D-myo-inositol) + phosphate. It carries out the reaction 1,2-dioctanoyl-sn-glycero-3-phospho-(1D-myo-inositol-3,5-bisphosphate) + H2O = 1,2-dioctanoyl-sn-glycero-3-phospho-(1D-myo-inositol-5-phosphate) + phosphate. It catalyses the reaction 1,2-dihexadecanoyl-sn-glycero-3-phospho-(1D-myo-inositol-3,5-phosphate) + H2O = 1,2-dihexadecanoyl-sn-glycero-3-phospho-(1D-myo-inositol-5-phosphate) + phosphate. With respect to regulation, allosterically activated by phosphatidylinositol 5-phosphate (PI5P). Lipid phosphatase which dephosphorylates phosphatidylinositol 3-monophosphate (PI3P) and phosphatidylinositol 3,5-bisphosphate (PI(3,5)P2). Has also been shown to dephosphorylate phosphotyrosine- and phosphoserine-containing peptides. Negatively regulates EGFR degradation through regulation of EGFR trafficking from the late endosome to the lysosome. Plays a role in vacuolar formation and morphology. Regulates desmin intermediate filament assembly and architecture. Plays a role in mitochondrial morphology and positioning. Required for skeletal muscle maintenance but not for myogenesis. In skeletal muscles, stabilizes MTMR12 protein levels. The polypeptide is Myotubularin (Rattus norvegicus (Rat)).